The primary structure comprises 277 residues: Type II restriction enzyme RsrI (277 aa).

It belongs to the EcoRI type II restriction endonuclease family. Homodimer. The cofactor is Mg(2+).

The enzyme catalyses Endonucleolytic cleavage of DNA to give specific double-stranded fragments with terminal 5'-phosphates.. A P subtype restriction enzyme that recognizes the double-stranded sequence 5'-GAATTC-3' and cleaves after G-1. This chain is Type II restriction enzyme RsrI (rsrIR), found in Cereibacter sphaeroides (Rhodobacter sphaeroides).